We begin with the raw amino-acid sequence, 138 residues long: Acid shock protein (138 aa).

An N-terminal signal peptide occupies residues 1 to 21 (MKKVLALIVAATMGLSSVAFA). A propeptide spanning residues 22 to 85 (ADAVAPAAAA…TKKAPAQKAQ (64 aa)) is cleaved from the precursor. The segment covering 31 to 50 (APAATTTAAPAAAATKAPAK) has biased composition (low complexity). The disordered stretch occupies residues 31 to 138 (APAATTTAAP…ATKKAAPAAK (108 aa)). Composition is skewed to basic residues over residues 51 to 77 (ATHHKKAHKKAPAQKAQAAKKHHKATK) and 122 to 131 (AAKKHHKATK).

Belongs to the Asr family. Proteolytic processing gives rise to the active protein.

The protein localises to the periplasm. In terms of biological role, required for growth and/or survival at acidic conditions. The protein is Acid shock protein of Serratia proteamaculans (strain 568).